A 248-amino-acid chain; its full sequence is MAPGAPSSSPSPILAALLFSSLVLSPALAIVVYTDREIYGAVGSQVTLHCSFWSSEWVSDDISFTWRYQPEGGRDAISIFHYAKGQPYIDEVGAFKERIQWVGDPRWKDGSIVIHNLDYSDNGTFTCDVKNPPDIVGKTSQVTLYVFEKVPTRYGVVLGAVIGGILGVVLLLLLLFYLIRYCWLRRQAALQRRLSAMEKGRFHKSSKDSSKRGRQTPVLYAMLDHSRSTKAASEKKSKGLGESRKDKK.

Positions 1-29 (MAPGAPSSSPSPILAALLFSSLVLSPALA) are cleaved as a signal peptide. The Ig-like V-type domain maps to 30–143 (IVVYTDREIY…DIVGKTSQVT (114 aa)). Topologically, residues 30–153 (IVVYTDREIY…LYVFEKVPTR (124 aa)) are extracellular. Cysteines 50 and 127 form a disulfide. An N-linked (GlcNAc...) (complex) asparagine glycan is attached at asparagine 122. The helical transmembrane segment at 154–179 (YGVVLGAVIGGILGVVLLLLLLFYLI) threads the bilayer. Over 180-248 (RYCWLRRQAA…GLGESRKDKK (69 aa)) the chain is Cytoplasmic. The residue at position 210 (serine 210) is a Phosphoserine; by PKC. Residues 222 to 248 (MLDHSRSTKAASEKKSKGLGESRKDKK) are disordered. A compositionally biased stretch (basic and acidic residues) spans 224-248 (DHSRSTKAASEKKSKGLGESRKDKK). Phosphoserine is present on residues serine 226 and serine 228. Serine 233 is subject to Phosphoserine; by PKC. Phosphoserine occurs at positions 237 and 243.

The protein belongs to the myelin P0 protein family. Homodimer and homotetramer. Post-translationally, N-glycosylated; contains sulfate-substituted glycan. As to expression, found only in peripheral nervous system Schwann cells.

Its subcellular location is the cell membrane. In terms of biological role, is an adhesion molecule necessary for normal myelination in the peripheral nervous system. It mediates adhesion between adjacent myelin wraps and ultimately drives myelin compaction. This Mus musculus (Mouse) protein is Myelin protein P0 (Mpz).